The chain runs to 289 residues: Ribosomal RNA small subunit methyltransferase A (289 aa).

Positions 27, 29, 54, 76, 102, and 123 each coordinate S-adenosyl-L-methionine.

Belongs to the class I-like SAM-binding methyltransferase superfamily. rRNA adenine N(6)-methyltransferase family. RsmA subfamily.

It localises to the cytoplasm. It carries out the reaction adenosine(1518)/adenosine(1519) in 16S rRNA + 4 S-adenosyl-L-methionine = N(6)-dimethyladenosine(1518)/N(6)-dimethyladenosine(1519) in 16S rRNA + 4 S-adenosyl-L-homocysteine + 4 H(+). Its function is as follows. Specifically dimethylates two adjacent adenosines (A1518 and A1519) in the loop of a conserved hairpin near the 3'-end of 16S rRNA in the 30S particle. May play a critical role in biogenesis of 30S subunits. The polypeptide is Ribosomal RNA small subunit methyltransferase A (Maricaulis maris (strain MCS10) (Caulobacter maris)).